A 798-amino-acid polypeptide reads, in one-letter code: Integrin beta-1 (798 aa).

The first 20 residues, 1-20 (MNLQLIFWIGLISSVCCVFG), serve as a signal peptide directing secretion. Residues 21–728 (QADENRCLKA…ETPECPTGPD (708 aa)) lie on the Extracellular side of the membrane. In terms of domain architecture, PSI spans 26-76 (RCLKANAKSCGECIQAGPNCGWCTNSTFLQEGMPTSARCDDLEALKKKGCH). 28 disulfide bridges follow: Cys-27–Cys-45, Cys-35–Cys-464, Cys-38–Cys-64, Cys-48–Cys-75, Cys-207–Cys-213, Cys-261–Cys-301, Cys-401–Cys-415, Cys-435–Cys-462, Cys-466–Cys-486, Cys-477–Cys-489, Cys-491–Cys-500, Cys-502–Cys-533, Cys-516–Cys-531, Cys-525–Cys-536, Cys-538–Cys-553, Cys-555–Cys-576, Cys-560–Cys-574, Cys-568–Cys-579, Cys-581–Cys-590, Cys-592–Cys-615, Cys-599–Cys-613, Cys-607–Cys-618, Cys-620–Cys-630, Cys-633–Cys-636, Cys-640–Cys-691, Cys-646–Cys-665, Cys-649–Cys-661, and Cys-699–Cys-723. The N-linked (GlcNAc...) asparagine glycan is linked to Asn-50. The segment covering 75–91 (CHPNDIENPRGSKDIKK) has biased composition (basic and acidic residues). A disordered region spans residues 75–105 (CHPNDIENPRGSKDIKKNKNVTNRSKGTAEK). 2 N-linked (GlcNAc...) asparagine glycosylation sites follow: Asn-94 and Asn-97. One can recognise a VWFA domain in the interval 140 to 378 (DYPIDLYYLM…QLIIDAYNSL (239 aa)). Mg(2+)-binding residues include Ser-152 and Ser-154. Residues Ser-154, Asp-157, Asp-158, and Glu-189 each coordinate Ca(2+). The interval 207-213 (CTNEQNC) is CX3CL1-binding. N-linked (GlcNAc...) asparagine glycosylation is present at Asn-212. Ca(2+)-binding residues include Asn-244, Asp-246, Pro-248, and Glu-249. Glu-249 lines the Mg(2+) pocket. The N-linked (GlcNAc...) asparagine glycan is linked to Asn-269. The CX3CL1-binding stretch occupies residues 295 to 314 (LPNDGQCHLENDVYTMSHYY). Ala-362 serves as a coordination point for Ca(2+). Asn-363, Asn-406, and Asn-417 each carry an N-linked (GlcNAc...) asparagine glycan. The interval 383 to 465 (ILENSKLPEG…IILQFICECE (83 aa)) is interaction with TMEM182. 4 consecutive I-EGF domains span residues 466–501 (CQGE…RHCE), 502–554 (CSTD…KFCE), 555–591 (CDNF…SACD), and 592–631 (CSLD…PTCE). The N-linked (GlcNAc...) asparagine glycan is linked to Asn-481. A glycan (N-linked (GlcNAc...) asparagine) is linked at Asn-520. N-linked (GlcNAc...) asparagine glycosylation occurs at Asn-584. N-linked (GlcNAc...) asparagine glycosylation occurs at Asn-669. A helical transmembrane segment spans residues 729 to 749 (IIPIVAGVVAGIVLIGLALLL). Residues 750-798 (IWKLLMIIHDRREFAKFEKEKMNAKWDTGENPIYKSAVTTVVNPKYEGK) are Cytoplasmic-facing. Residues 762–767 (EFAKFE) are signal for sorting from recycling endosomes; interaction with ACAP1. Thr-777 is modified (phosphothreonine). Residue Tyr-783 is modified to Phosphotyrosine. Ser-785 is modified (phosphoserine). Residues 785 to 792 (SAVTTVVN) form an interaction with ITGB1BP1 region. Thr-789 is modified (phosphothreonine). Residue Lys-794 is modified to N6-acetyllysine; alternate. Lys-794 participates in a covalent cross-link: Glycyl lysine isopeptide (Lys-Gly) (interchain with G-Cter in SUMO1); alternate.

It belongs to the integrin beta chain family. In terms of assembly, interacts with seprase FAP (seprase); the interaction occurs at the cell surface of invadopodia membrane in a collagen-dependent manner. Heterodimer of an alpha and a beta subunit. Beta-1 associates with either alpha-1, alpha-2, alpha-3, alpha-4, alpha-5, alpha-6, alpha-7, alpha-8, alpha-9, alpha-10, alpha-11 or alpha-V. ITGA6:ITGB1 is found in a complex with CD9; interaction takes place in oocytes and is involved in sperm-egg fusion. Binds LGALS3BP and NMRK2, when associated with alpha-7, but not with alpha-5. Interacts with FLNB, FLNC and RANBP9. Interacts with KRT1 in the presence of RACK1 and SRC. Interacts with JAML; integrin alpha-4/beta-1 may regulate leukocyte to endothelial cells adhesion by controlling JAML homodimerization. Interacts with RAB21. Interacts (via the cytoplasmic region) with RAB25 (via the hypervariable C-terminal region). Interacts with MYO10. Interacts with ITGB1BP1 (via C-terminal region); the interaction is a prerequisite for focal adhesion disassembly. Interacts with TLN1; the interaction is prevented by competitive binding of ITGB1BP1. Interacts with ACAP1; required for ITGB1 recycling. Interacts with ASAP3. Interacts with FERMT2; the interaction is inhibited in presence of ITGB1BP1. Interacts with DAB2. Interacts with FGR and HCK. Interacts with EMP2; the interaction may be direct or indirect and ITGB1 has a heterodimer form. ITGA5:ITGB1 interacts with CCN3. ITGA4:ITGB1 is found in a ternary complex with CX3CR1 and CX3CL1. ITGA5:ITGB1 interacts with FBN1. ITGA5:ITGB1 interacts with IL1B. Interacts with MDK. ITGA4:ITGB1 interacts with MDK; this interaction mediates MDK-induced osteoblast cells migration through PXN phosphorylation. ITGA6:ITGB1 interacts with MDK; this interaction mediates MDK-induced neurite-outgrowth. ITGA5:ITGB1 interacts with ACE2. Interacts with TMEM182 and LAMB1. Interacts with tensin TNS3; TNS3 also interacts with PEAK1, thus acting as an adapter molecule to bridge the association of PEAK1 with ITGB1. Interacts with tensin TNS4; the interaction displaces tensin TNS3 from the ITGB1 cytoplasmic tail and promotes ITGB1 stability. Integrin ITGA9:ITGB1 interacts with SPP1/OPN (via N-terminus). Integrin ITGA9:ITGB1 interacts with TNC/TNFN3 (via the 3rd Fibronectin type-III domain). Integrins ITGA4:ITGB1 and ITGA9:ITGB1 interact with SVEP1 (via Sushi domain 21); thereby inhibit Ca(2+) intracellular signaling and as a result repress vasocontraction. ITGA4:ITGB1 and ITGA5:ITGB1 interacts with SELP. Interacts with CD248. ITGA5:ITGB1 interacts with IGFBP1. ITGA4:ITGB1 interacts with BCAM. Interacts with ADGRG6. As to quaternary structure, interacts with the C-terminal region of FLNC. Interacts with filamin FLNA isoform 3/VAR-1. Interacts with ACE2. Interacts with alpha-7B in cardiomyocytes of adult heart and alpha-7A and alpha-7B in adult skeletal muscle. Interacts with filamin FLNA isoform 3/VAR-1.

The protein localises to the cell membrane. The protein resides in the cell projection. It is found in the invadopodium membrane. It localises to the ruffle membrane. Its subcellular location is the recycling endosome. The protein localises to the melanosome. The protein resides in the lamellipodium. It is found in the ruffle. It localises to the cell junction. Its subcellular location is the focal adhesion. The protein localises to the sarcolemma. Integrins alpha-1/beta-1, alpha-2/beta-1, alpha-10/beta-1 and alpha-11/beta-1 are receptors for collagen. Integrins alpha-1/beta-1 and alpha-2/beta-2 recognize the proline-hydroxylated sequence G-F-P-G-E-R in collagen. Integrins alpha-2/beta-1, alpha-3/beta-1, alpha-4/beta-1, alpha-5/beta-1, alpha-8/beta-1, alpha-10/beta-1, alpha-11/beta-1 and alpha-V/beta-1 are receptors for fibronectin. Alpha-4/beta-1 recognizes one or more domains within the alternatively spliced CS-1 and CS-5 regions of fibronectin. Integrin alpha-5/beta-1 is a receptor for fibrinogen. Integrin alpha-1/beta-1, alpha-2/beta-1, alpha-6/beta-1 and alpha-7/beta-1 are receptors for lamimin. Integrin alpha-6/beta-1 (ITGA6:ITGB1) is present in oocytes and is involved in sperm-egg fusion. Integrin alpha-4/beta-1 is a receptor for VCAM1 and recognizes the sequence Q-I-D-S in VCAM1. Integrin alpha-9/beta-1 is a receptor for VCAM1, cytotactin and osteopontin. It recognizes the sequence A-E-I-D-G-I-E-L in cytotactin. Integrin alpha-3/beta-1 is a receptor for epiligrin, thrombospondin and CSPG4. Integrin alpha-3/beta-1 provides a docking site for FAP (seprase) at invadopodia plasma membranes in a collagen-dependent manner and hence may participate in the adhesion, formation of invadopodia and matrix degradation processes, promoting cell invasion. Alpha-3/beta-1 may mediate with LGALS3 the stimulation by CSPG4 of endothelial cells migration. Integrin alpha-V/beta-1 is a receptor for vitronectin. Beta-1 integrins recognize the sequence R-G-D in a wide array of ligands. When associated with alpha-7/beta-1 integrin, regulates cell adhesion and laminin matrix deposition. Involved in promoting endothelial cell motility and angiogenesis. Involved in osteoblast compaction through the fibronectin fibrillogenesis cell-mediated matrix assembly process and the formation of mineralized bone nodules. May be involved in up-regulation of the activity of kinases such as PKC via binding to KRT1. Together with KRT1 and RACK1, serves as a platform for SRC activation or inactivation. Plays a mechanistic adhesive role during telophase, required for the successful completion of cytokinesis. ITGA4:ITGB1 binds to fractalkine (CX3CL1) and may act as its coreceptor in CX3CR1-dependent fractalkine signaling. ITGA4:ITGB1 and ITGA5:ITGB1 bind to PLA2G2A via a site (site 2) which is distinct from the classical ligand-binding site (site 1) and this induces integrin conformational changes and enhanced ligand binding to site 1. ITGA5:ITGB1 acts as a receptor for fibrillin-1 (FBN1) and mediates R-G-D-dependent cell adhesion to FBN1. ITGA5:ITGB1 acts as a receptor for fibronectin FN1 and mediates R-G-D-dependent cell adhesion to FN1. ITGA5:ITGB1 is a receptor for IL1B and binding is essential for IL1B signaling. ITGA5:ITGB3 is a receptor for soluble CD40LG and is required for CD40/CD40LG signaling. Plays an important role in myoblast differentiation and fusion during skeletal myogenesis. ITGA9:ITGB1 may play a crucial role in SVEP1/polydom-mediated myoblast cell adhesion. Integrins ITGA9:ITGB1 and ITGA4:ITGB1 repress PRKCA-mediated L-type voltage-gated channel Ca(2+) influx and ROCK-mediated calcium sensitivity in vascular smooth muscle cells via their interaction with SVEP1, thereby inhibit vasocontraction. The protein is Integrin beta-1 (ITGB1) of Bos taurus (Bovine).